The primary structure comprises 372 residues: DNA-directed RNA polymerase subunit alpha (372 aa).

An alpha N-terminal domain (alpha-NTD) region spans residues 1 to 268 (MIFDEDSNSV…DQFQPFINFD (268 aa)). Positions 280 to 372 (KDALPYDSNL…ESLSKQYSEE (93 aa)) are alpha C-terminal domain (alpha-CTD).

It belongs to the RNA polymerase alpha chain family. In terms of assembly, homodimer. The RNAP catalytic core consists of 2 alpha, 1 beta, 1 beta' and 1 omega subunit. When a sigma factor is associated with the core the holoenzyme is formed, which can initiate transcription.

It catalyses the reaction RNA(n) + a ribonucleoside 5'-triphosphate = RNA(n+1) + diphosphate. In terms of biological role, DNA-dependent RNA polymerase catalyzes the transcription of DNA into RNA using the four ribonucleoside triphosphates as substrates. In Ehrlichia canis (strain Jake), this protein is DNA-directed RNA polymerase subunit alpha.